The chain runs to 425 residues: L-cysteine:1D-myo-inositol 2-amino-2-deoxy-alpha-D-glucopyranoside ligase (425 aa).

Cys43 contacts Zn(2+). L-cysteinyl-5'-AMP contacts are provided by residues 43–46 (CGIT), Thr58, and 81–83 (NVT). Positions 45–55 (ITPYDATHIGH) match the 'HIGH' region motif. Residues 195–200 (ERGGDP) carry the 'ERGGDP' region motif. Trp236 serves as a coordination point for L-cysteinyl-5'-AMP. Cys240 contacts Zn(2+). 258 to 260 (GSD) contributes to the L-cysteinyl-5'-AMP binding site. Zn(2+) is bound at residue His265. Val295 serves as a coordination point for L-cysteinyl-5'-AMP. The 'KMSKS' region signature appears at 301-305 (KMSKS).

Belongs to the class-I aminoacyl-tRNA synthetase family. MshC subfamily. In terms of assembly, monomer. Requires Zn(2+) as cofactor.

The enzyme catalyses 1D-myo-inositol 2-amino-2-deoxy-alpha-D-glucopyranoside + L-cysteine + ATP = 1D-myo-inositol 2-(L-cysteinylamino)-2-deoxy-alpha-D-glucopyranoside + AMP + diphosphate + H(+). Functionally, catalyzes the ATP-dependent condensation of GlcN-Ins and L-cysteine to form L-Cys-GlcN-Ins. The chain is L-cysteine:1D-myo-inositol 2-amino-2-deoxy-alpha-D-glucopyranoside ligase from Sanguibacter keddieii (strain ATCC 51767 / DSM 10542 / NCFB 3025 / ST-74).